A 643-amino-acid chain; its full sequence is Manganese lipoxygenase (643 aa).

In terms of domain architecture, Lipoxygenase spans 166 to 643 (WYTDEVFAQQ…PEQLANAIVI (478 aa)). Residues His325, His330, His510, Asn514, and Ile643 each coordinate Mn(2+).

This sequence belongs to the lipoxygenase family. Requires Mn(2+) as cofactor.

It carries out the reaction (9Z,12Z)-octadecadienoate + O2 = (13S)-hydroperoxy-(9Z,11E)-octadecadienoate. Its function is as follows. Lipoxygenase that metabolizes linoleic and alpha-linolenic acids to 13S-hydroperoxy fatty acids. This chain is Manganese lipoxygenase, found in Pleurotus sapidus (Oyster mushroom).